The chain runs to 539 residues: Glycerol kinase (539 aa).

T49 is an ADP binding site. ATP is bound by residues T49, T50, and S51. T49 contacts sn-glycerol 3-phosphate. R53 is a binding site for ADP. R119, E120, Y171, and D280 together coordinate sn-glycerol 3-phosphate. Positions 119, 120, 171, 280, and 281 each coordinate glycerol. 2 residues coordinate ADP: T302 and G345. ATP-binding residues include T302, G345, Q349, and G446. G446 and N450 together coordinate ADP.

It belongs to the FGGY kinase family.

The catalysed reaction is glycerol + ATP = sn-glycerol 3-phosphate + ADP + H(+). It participates in polyol metabolism; glycerol degradation via glycerol kinase pathway; sn-glycerol 3-phosphate from glycerol: step 1/1. Inhibited by fructose 1,6-bisphosphate (FBP). Functionally, key enzyme in the regulation of glycerol uptake and metabolism. Catalyzes the phosphorylation of glycerol to yield sn-glycerol 3-phosphate. This is Glycerol kinase from Rhodopirellula baltica (strain DSM 10527 / NCIMB 13988 / SH1).